The chain runs to 431 residues: Glutamate-1-semialdehyde 2,1-aminomutase (431 aa).

At lysine 270 the chain carries N6-(pyridoxal phosphate)lysine.

It belongs to the class-III pyridoxal-phosphate-dependent aminotransferase family. HemL subfamily. As to quaternary structure, homodimer. Requires pyridoxal 5'-phosphate as cofactor.

It is found in the cytoplasm. It catalyses the reaction (S)-4-amino-5-oxopentanoate = 5-aminolevulinate. It participates in porphyrin-containing compound metabolism; protoporphyrin-IX biosynthesis; 5-aminolevulinate from L-glutamyl-tRNA(Glu): step 2/2. This is Glutamate-1-semialdehyde 2,1-aminomutase from Limosilactobacillus reuteri subsp. reuteri (strain JCM 1112) (Lactobacillus reuteri).